We begin with the raw amino-acid sequence, 85 residues long: uncharacterized protein (85 aa).

3 helical membrane-spanning segments follow: residues 4 to 24 (LTLCWLALLALAVTGVLLGGA), 27 to 47 (SPWLLAAVLACAVAKGWLIGE), and 61 to 81 (RLLLAWPLLMALAVGAALYLA).

The protein resides in the cell membrane. This is an uncharacterized protein from Pseudomonas aeruginosa (strain ATCC 15692 / DSM 22644 / CIP 104116 / JCM 14847 / LMG 12228 / 1C / PRS 101 / PAO1).